Reading from the N-terminus, the 758-residue chain is 5-methyltetrahydropteroyltriglutamate--homocysteine methyltransferase (758 aa).

5-methyltetrahydropteroyltri-L-glutamate-binding positions include 17 to 20 (RELK) and K117. L-homocysteine is bound by residues 434–436 (IGS) and E487. L-methionine is bound by residues 434–436 (IGS) and E487. 5-methyltetrahydropteroyltri-L-glutamate is bound by residues 518–519 (RC) and W564. An L-homocysteine-binding site is contributed by D602. Residue D602 coordinates L-methionine. E608 contacts 5-methyltetrahydropteroyltri-L-glutamate. Positions 644, 646, and 668 each coordinate Zn(2+). H697 serves as the catalytic Proton donor. Residue C729 participates in Zn(2+) binding.

It belongs to the vitamin-B12 independent methionine synthase family. Zn(2+) serves as cofactor.

The catalysed reaction is 5-methyltetrahydropteroyltri-L-glutamate + L-homocysteine = tetrahydropteroyltri-L-glutamate + L-methionine. It participates in amino-acid biosynthesis; L-methionine biosynthesis via de novo pathway; L-methionine from L-homocysteine (MetE route): step 1/1. Its function is as follows. Catalyzes the transfer of a methyl group from 5-methyltetrahydrofolate to homocysteine resulting in methionine formation. This Sodalis glossinidius (strain morsitans) protein is 5-methyltetrahydropteroyltriglutamate--homocysteine methyltransferase.